A 340-amino-acid chain; its full sequence is 3-hydroxybenzoate synthase (340 aa).

Substrate is bound by residues Tyr147, Arg154, Tyr207, and Arg220. The active-site Proton acceptor is the Glu334.

It belongs to the FkbO/Hyg5 family. As to quaternary structure, trimer.

The catalysed reaction is chorismate = 3-hydroxybenzoate + pyruvate. Involved in the biosynthesis of BC325, a rapamycin analog containing a 3-hydroxybenzoate starter unit. Catalyzes the hydrolysis of chorismate via an intramolecular mechanism to yield 3-hydroxybenzoate (3HBA). This Streptomyces hygroscopicus protein is 3-hydroxybenzoate synthase.